The primary structure comprises 1115 residues: Gamma tubulin complex adapter mto1 (1115 aa).

Residues 25 to 180 (LTDEEVRRIL…NYISSSLDQL (156 aa)) form a disordered region. Basic and acidic residues-rich tracts occupy residues 28–41 (EEVR…KEGS) and 56–71 (EASH…DSLK). 3 stretches are compositionally biased toward polar residues: residues 72 to 102 (SDSG…VNKL), 119 to 130 (DTTNFDRLNDNI), and 139 to 151 (PVLT…QSQE). Ser-94 bears the Phosphoserine mark. Residues 165–176 (SDPSSPNYISSS) show a composition bias toward low complexity. Positions 445-915 (NEALLLRKQE…ERNSLIKNIV (471 aa)) form a coiled coil. The required for interaction with mto2 stretch occupies residues 523–537 (LMRMEQQWREDVDQL). Positions 1001-1011 (GSTSSIPNSPR) are enriched in polar residues. Disordered stretches follow at residues 1001-1037 (GSTS…AVQR) and 1067-1115 (EQEG…QEHK). Phosphoserine occurs at positions 1005 and 1009. Basic and acidic residues-rich tracts occupy residues 1016–1025 (VSLDSEDKKL) and 1067–1084 (EQEG…RLQD). The stretch at 1072-1102 (KRDKLGARERLQDLIRQNRSLSRQIKTDKES) forms a coiled coil. Composition is skewed to polar residues over residues 1086–1095 (IRQNRSLSRQ) and 1104–1115 (SRSPSISSQEHK).

As to quaternary structure, interacts with mto2; the interaction is direct and required for efficient binding to the gamma-tubulin complex. Interacts with gamma tubulin complex subunits alp4, alp6 and gtb1. Interacts with mcp6.

It is found in the cytoplasm. The protein localises to the cytoskeleton. It localises to the microtubule organizing center. The protein resides in the spindle pole body. In terms of biological role, spindle pole body (SPB) component that acts as the gamma-tubulin complex-binding protein of the SPB outer plaque. Promotes nucleation of all cytoplasmic microtubules by recruiting the gamma-tubulin complex to the spindle pole body (SPB), to the interphase microtubule organizing center (iMTOC), and to the equatorial MTOC (eMTOC) during anaphase. The protein is Gamma tubulin complex adapter mto1 of Schizosaccharomyces pombe (strain 972 / ATCC 24843) (Fission yeast).